We begin with the raw amino-acid sequence, 879 residues long: Mediator of RNA polymerase II transcription subunit 14 (879 aa).

It belongs to the Mediator complex subunit 14 family. As to quaternary structure, component of the Mediator complex.

The protein resides in the nucleus. Component of the Mediator complex, a coactivator involved in the regulated transcription of nearly all RNA polymerase II-dependent genes. Mediator functions as a bridge to convey information from gene-specific regulatory proteins to the basal RNA polymerase II transcription machinery. Mediator is recruited to promoters by direct interactions with regulatory proteins and serves as a scaffold for the assembly of a functional preinitiation complex with RNA polymerase II and the general transcription factors. In Schizosaccharomyces pombe (strain 972 / ATCC 24843) (Fission yeast), this protein is Mediator of RNA polymerase II transcription subunit 14 (med14).